The chain runs to 205 residues: Inactive ribonuclease-like protein 9 (205 aa).

A signal peptide spans 1-26 (MMRTLITIHPLPLLLLLQQLLQPVQF). 3 cysteine pairs are disulfide-bonded: cysteine 98–cysteine 153, cysteine 116–cysteine 168, and cysteine 123–cysteine 130. Asparagine 131 and asparagine 143 each carry an N-linked (GlcNAc...) asparagine glycan.

It belongs to the pancreatic ribonuclease family.

The protein localises to the secreted. In terms of biological role, does not exhibit any ribonuclease activity. The protein is Inactive ribonuclease-like protein 9 (RNASE9) of Gorilla gorilla gorilla (Western lowland gorilla).